The following is a 654-amino-acid chain: MICOS complex subunit MIC60-2 (654 aa).

The transit peptide at 1–12 (MRGSRNLLTQRL) directs the protein to the mitochondrion. The Mitochondrial matrix portion of the chain corresponds to 13 to 20 (ASSRATGS). A helical membrane pass occupies residues 21 to 43 (SGGLKFVGATVGAVTAGAAGVAG). Residues 44–654 (YASYDNEFRK…AALTSIRSTY (611 aa)) are Mitochondrial intermembrane-facing. Over residues 115 to 129 (LKETTEPKKIEKKPE) the composition is skewed to basic and acidic residues. A disordered region spans residues 115–140 (LKETTEPKKIEKKPENPYIGAKTPLN).

The protein belongs to the MICOS complex subunit Mic60 family. As to quaternary structure, component of the mitochondrial contact site and cristae organizing system (MICOS) complex. In terms of tissue distribution, expressed in the gonads and muscle cells.

Its subcellular location is the mitochondrion inner membrane. The protein resides in the cytoplasm. Its function is as follows. Sustains mitochondrial morphology probably through maintaining cristae morphology. May act as a component of the MICOS complex, a large protein complex of the mitochondria. This is MICOS complex subunit MIC60-2 from Caenorhabditis elegans.